The following is a 292-amino-acid chain: Phosphoribosylglycinamide formyltransferase, chloroplastic (292 aa).

The N-terminal 65 residues, 1–65, are a transit peptide targeting the chloroplast; sequence MESRVLFSSQ…KAASSTPQIV (65 aa). A N(1)-(5-phospho-beta-D-ribosyl)glycinamide-binding site is contributed by 88-90; that stretch reads GSN. (6R)-10-formyltetrahydrofolate contacts are provided by residues 167–170 and asparagine 184; that span reads LKLI. Histidine 186 functions as the Proton donor in the catalytic mechanism. Aspartate 227 provides a ligand contact to (6R)-10-formyltetrahydrofolate. Glutamate 256 lines the N(1)-(5-phospho-beta-D-ribosyl)glycinamide pocket.

This sequence belongs to the GART family.

It is found in the plastid. The protein localises to the chloroplast. The enzyme catalyses N(1)-(5-phospho-beta-D-ribosyl)glycinamide + (6R)-10-formyltetrahydrofolate = N(2)-formyl-N(1)-(5-phospho-beta-D-ribosyl)glycinamide + (6S)-5,6,7,8-tetrahydrofolate + H(+). Its pathway is purine metabolism; IMP biosynthesis via de novo pathway; N(2)-formyl-N(1)-(5-phospho-D-ribosyl)glycinamide from N(1)-(5-phospho-D-ribosyl)glycinamide (10-formyl THF route): step 1/1. The protein is Phosphoribosylglycinamide formyltransferase, chloroplastic (PUR3) of Arabidopsis thaliana (Mouse-ear cress).